Here is a 159-residue protein sequence, read N- to C-terminus: Transcription elongation factor GreA (159 aa).

Residues 3–37 are a coiled coil; sequence TNKEVVLTYEGLQKLEQELENLKTVKRREVAERIK.

This sequence belongs to the GreA/GreB family.

In terms of biological role, necessary for efficient RNA polymerase transcription elongation past template-encoded arresting sites. The arresting sites in DNA have the property of trapping a certain fraction of elongating RNA polymerases that pass through, resulting in locked ternary complexes. Cleavage of the nascent transcript by cleavage factors such as GreA or GreB allows the resumption of elongation from the new 3'terminus. GreA releases sequences of 2 to 3 nucleotides. The chain is Transcription elongation factor GreA from Acetivibrio thermocellus (strain ATCC 27405 / DSM 1237 / JCM 9322 / NBRC 103400 / NCIMB 10682 / NRRL B-4536 / VPI 7372) (Clostridium thermocellum).